The sequence spans 1300 residues: ATP-dependent RNA helicase HrpA (1300 aa).

Residues 87 to 250 (LEAIRDHQVV…FNNAPIIEVS (164 aa)) enclose the Helicase ATP-binding domain. 100 to 107 (GETGSGKT) serves as a coordination point for ATP. A DEAH box motif is present at residues 197 to 200 (DEAH). One can recognise a Helicase C-terminal domain in the interval 274-444 (QLQAIFDAVD…SVILQMTALG (171 aa)).

The protein belongs to the DEAD box helicase family. DEAH subfamily.

It catalyses the reaction ATP + H2O = ADP + phosphate + H(+). Functionally, not yet known. In Escherichia coli (strain K12), this protein is ATP-dependent RNA helicase HrpA (hrpA).